The sequence spans 285 residues: Putative ankyrin repeat protein R551 (285 aa).

4 ANK repeats span residues 99 to 129, 157 to 186, 188 to 214, and 215 to 249; these read DLKS…PIKI, NDFD…LQDE, IGKI…EAFR, and SAPD…CIQQ.

This is Putative ankyrin repeat protein R551 from Acanthamoeba polyphaga (Amoeba).